The chain runs to 241 residues: 1-(5-phosphoribosyl)-5-[(5-phosphoribosylamino)methylideneamino] imidazole-4-carboxamide isomerase (241 aa).

Catalysis depends on aspartate 8, which acts as the Proton acceptor. The active-site Proton donor is aspartate 130.

This sequence belongs to the HisA/HisF family.

It localises to the cytoplasm. The enzyme catalyses 1-(5-phospho-beta-D-ribosyl)-5-[(5-phospho-beta-D-ribosylamino)methylideneamino]imidazole-4-carboxamide = 5-[(5-phospho-1-deoxy-D-ribulos-1-ylimino)methylamino]-1-(5-phospho-beta-D-ribosyl)imidazole-4-carboxamide. It participates in amino-acid biosynthesis; L-histidine biosynthesis; L-histidine from 5-phospho-alpha-D-ribose 1-diphosphate: step 4/9. The protein is 1-(5-phosphoribosyl)-5-[(5-phosphoribosylamino)methylideneamino] imidazole-4-carboxamide isomerase of Leptospira interrogans serogroup Icterohaemorrhagiae serovar copenhageni (strain Fiocruz L1-130).